The primary structure comprises 152 residues: Large ribosomal subunit protein uL15 (152 aa).

The disordered stretch occupies residues 1 to 55 (MRLHELKPNEGATHKKKRVGRGIGSGHGKTSTKGQKGQTSRSGDSKLPARFEGGQ). Over residues 28–42 (GKTSTKGQKGQTSRS) the composition is skewed to polar residues.

Belongs to the universal ribosomal protein uL15 family. In terms of assembly, part of the 50S ribosomal subunit.

Binds to the 23S rRNA. The chain is Large ribosomal subunit protein uL15 from Sulfurihydrogenibium sp. (strain YO3AOP1).